A 373-amino-acid chain; its full sequence is Probable protein phosphatase 2C 73 (373 aa).

Residues 61–354 form the PPM-type phosphatase domain; it reads LASLFSKRGE…DDMSVVCLFL (294 aa). Mn(2+)-binding residues include Asp97, Gly98, Asp299, and Asp345.

The protein belongs to the PP2C family. Mg(2+) serves as cofactor. Requires Mn(2+) as cofactor.

It carries out the reaction O-phospho-L-seryl-[protein] + H2O = L-seryl-[protein] + phosphate. It catalyses the reaction O-phospho-L-threonyl-[protein] + H2O = L-threonyl-[protein] + phosphate. This Arabidopsis thaliana (Mouse-ear cress) protein is Probable protein phosphatase 2C 73 (PPC6-7).